Reading from the N-terminus, the 198-residue chain is Guanylyl cyclase-activating protein 2 (198 aa).

Residue Gly2 is the site of N-myristoyl glycine attachment. 4 EF-hand domains span residues 16–51, 52–87, 88–123, and 139–174; these read DVAELQEWYKKFVVECPSGTLFMHEFKRFFGVQDNH, EAAEYIENMFRAFDKNGDNTIDFLEYVAALNLVLRG, KLEHKLRWTFKVYDKDGNGCIDKPELLEIVESIYKL, and TPEEVVDRIFQLVDENGDGQLSLDEFIDGARKDKWV. Ca(2+) contacts are provided by Asp65, Asn67, Asp69, Thr71, Glu76, Asp101, Asp103, Asn105, Cys107, Glu112, Asp152, Asn154, Asp156, Gln158, and Glu163.

In terms of assembly, undergoes dimerization at low calcium ions concentration, while the presence of calcium ions inhibits its dimerization. Dimerization correlates with its ability to activate GC. In terms of tissue distribution, retina and pineal gland.

In terms of biological role, stimulates synthesis of cGMP in photoreceptors. Thought to mediate Ca(2+)-sensitive regulation of retinal guanylyl cyclase (GC), a key event in recovery of the dark state of rod photoreceptors following light exposure. This is Guanylyl cyclase-activating protein 2 (GUCA1B) from Gallus gallus (Chicken).